The primary structure comprises 231 residues: Large ribosomal subunit protein uL1 (231 aa).

Belongs to the universal ribosomal protein uL1 family. Part of the 50S ribosomal subunit.

Binds directly to 23S rRNA. The L1 stalk is quite mobile in the ribosome, and is involved in E site tRNA release. In terms of biological role, protein L1 is also a translational repressor protein, it controls the translation of the L11 operon by binding to its mRNA. This chain is Large ribosomal subunit protein uL1, found in Mycoplasmopsis synoviae (strain 53) (Mycoplasma synoviae).